A 134-amino-acid chain; its full sequence is Ribonuclease VapC1 (134 aa).

A PINc domain is found at 3 to 132 (YMLDTNIIIY…RITDLQWQDW (130 aa)). Residues Asp-6 and Asp-99 each coordinate Mg(2+).

The protein belongs to the PINc/VapC protein family. As to quaternary structure, forms a complex with VapB1. Requires Mg(2+) as cofactor.

Functionally, toxic component of a type II toxin-antitoxin (TA) system. Upon expression in E.coli inhibits growth in liquid culture. Its toxic effect is neutralized by coexpression with antitoxin VapB1. Degrades RNA but not ss- or ds-DNA in vitro, degradation is inhibited by VapB1 antitoxin. This is Ribonuclease VapC1 from Haemophilus influenzae (strain R2866).